A 231-amino-acid polypeptide reads, in one-letter code: Large ribosomal subunit protein uL1 (231 aa).

This sequence belongs to the universal ribosomal protein uL1 family. As to quaternary structure, part of the 50S ribosomal subunit.

Functionally, binds directly to 23S rRNA. The L1 stalk is quite mobile in the ribosome, and is involved in E site tRNA release. Protein L1 is also a translational repressor protein, it controls the translation of the L11 operon by binding to its mRNA. The polypeptide is Large ribosomal subunit protein uL1 (Thiobacillus denitrificans (strain ATCC 25259 / T1)).